The primary structure comprises 188 residues: Protein GrpE (188 aa).

A disordered region spans residues 1–22; sequence MADEQTLDTQNLDANQAPEASG.

This sequence belongs to the GrpE family. As to quaternary structure, homodimer.

Its subcellular location is the cytoplasm. Its function is as follows. Participates actively in the response to hyperosmotic and heat shock by preventing the aggregation of stress-denatured proteins, in association with DnaK and GrpE. It is the nucleotide exchange factor for DnaK and may function as a thermosensor. Unfolded proteins bind initially to DnaJ; upon interaction with the DnaJ-bound protein, DnaK hydrolyzes its bound ATP, resulting in the formation of a stable complex. GrpE releases ADP from DnaK; ATP binding to DnaK triggers the release of the substrate protein, thus completing the reaction cycle. Several rounds of ATP-dependent interactions between DnaJ, DnaK and GrpE are required for fully efficient folding. In Pseudomonas fluorescens (strain ATCC BAA-477 / NRRL B-23932 / Pf-5), this protein is Protein GrpE.